Reading from the N-terminus, the 462-residue chain is Argininosuccinate lyase (462 aa).

The protein belongs to the lyase 1 family. Argininosuccinate lyase subfamily.

The protein localises to the cytoplasm. The enzyme catalyses 2-(N(omega)-L-arginino)succinate = fumarate + L-arginine. It participates in amino-acid biosynthesis; L-arginine biosynthesis; L-arginine from L-ornithine and carbamoyl phosphate: step 3/3. In Lachnoclostridium phytofermentans (strain ATCC 700394 / DSM 18823 / ISDg) (Clostridium phytofermentans), this protein is Argininosuccinate lyase.